The sequence spans 245 residues: Aliphatic sulfonates import ATP-binding protein SsuB 2 (245 aa).

The ABC transporter domain maps to 15–229 (VAVRGLSRAF…DVADPEFARI (215 aa)). 47–54 (GASGCGKS) is a binding site for ATP.

Belongs to the ABC transporter superfamily. Aliphatic sulfonates importer (TC 3.A.1.17.2) family. As to quaternary structure, the complex is composed of two ATP-binding proteins (SsuB), two transmembrane proteins (SsuC) and a solute-binding protein (SsuA).

It is found in the cell inner membrane. It catalyses the reaction ATP + H2O + aliphatic sulfonate-[sulfonate-binding protein]Side 1 = ADP + phosphate + aliphatic sulfonateSide 2 + [sulfonate-binding protein]Side 1.. In terms of biological role, part of the ABC transporter complex SsuABC involved in aliphatic sulfonates import. Responsible for energy coupling to the transport system. The protein is Aliphatic sulfonates import ATP-binding protein SsuB 2 of Paracoccus denitrificans (strain Pd 1222).